The following is a 208-amino-acid chain: Peptidyl-tRNA hydrolase (208 aa).

TRNA is bound at residue tyrosine 19. Histidine 24 serves as the catalytic Proton acceptor. TRNA contacts are provided by phenylalanine 71, asparagine 73, and asparagine 119.

It belongs to the PTH family. In terms of assembly, monomer.

Its subcellular location is the cytoplasm. The catalysed reaction is an N-acyl-L-alpha-aminoacyl-tRNA + H2O = an N-acyl-L-amino acid + a tRNA + H(+). Its function is as follows. Hydrolyzes ribosome-free peptidyl-tRNAs (with 1 or more amino acids incorporated), which drop off the ribosome during protein synthesis, or as a result of ribosome stalling. Catalyzes the release of premature peptidyl moieties from peptidyl-tRNA molecules trapped in stalled 50S ribosomal subunits, and thus maintains levels of free tRNAs and 50S ribosomes. In Synechococcus elongatus (strain ATCC 33912 / PCC 7942 / FACHB-805) (Anacystis nidulans R2), this protein is Peptidyl-tRNA hydrolase.